The following is a 657-amino-acid chain: 1-deoxy-D-xylulose-5-phosphate synthase (657 aa).

Thiamine diphosphate-binding positions include His73 and 113–115; that span reads SHA. Asp145 serves as a coordination point for Mg(2+). Thiamine diphosphate is bound by residues 146 to 147, Asn175, Tyr293, and Glu375; that span reads GA. Residue Asn175 participates in Mg(2+) binding.

It belongs to the transketolase family. DXPS subfamily. In terms of assembly, homodimer. Mg(2+) is required as a cofactor. Requires thiamine diphosphate as cofactor.

It carries out the reaction D-glyceraldehyde 3-phosphate + pyruvate + H(+) = 1-deoxy-D-xylulose 5-phosphate + CO2. Its pathway is metabolic intermediate biosynthesis; 1-deoxy-D-xylulose 5-phosphate biosynthesis; 1-deoxy-D-xylulose 5-phosphate from D-glyceraldehyde 3-phosphate and pyruvate: step 1/1. Its function is as follows. Catalyzes the acyloin condensation reaction between C atoms 2 and 3 of pyruvate and glyceraldehyde 3-phosphate to yield 1-deoxy-D-xylulose-5-phosphate (DXP). The protein is 1-deoxy-D-xylulose-5-phosphate synthase of Paenarthrobacter aurescens (strain TC1).